The sequence spans 102 residues: Small ribosomal subunit protein uS10 (102 aa).

It belongs to the universal ribosomal protein uS10 family. In terms of assembly, part of the 30S ribosomal subunit.

Functionally, involved in the binding of tRNA to the ribosomes. In Dehalococcoides mccartyi (strain ATCC BAA-2266 / KCTC 15142 / 195) (Dehalococcoides ethenogenes (strain 195)), this protein is Small ribosomal subunit protein uS10.